The sequence spans 491 residues: Cytosolic Fe-S cluster assembly factor NAR1 (491 aa).

Residues Cys-20, Cys-59, Cys-62, Cys-65, Cys-177, Cys-231, Cys-412, and Cys-416 each contribute to the [4Fe-4S] cluster site.

The protein belongs to the NARF family. Interacts with CIA1.

Functionally, component of the cytosolic Fe/S protein assembly machinery. Required for maturation of extramitochondrial Fe/S proteins. May play a role in the transfer of pre-assembled Fe/S clusters to target apoproteins. This is Cytosolic Fe-S cluster assembly factor NAR1 (NAR1) from Saccharomyces cerevisiae (strain YJM789) (Baker's yeast).